The sequence spans 552 residues: Steroid transmembrane transporter SLC22A24 (552 aa).

A run of 12 helical transmembrane segments spans residues 16 to 36, 146 to 166, 178 to 200, 204 to 226, 234 to 254, 260 to 280, 350 to 370, 380 to 400, 407 to 427, 435 to 455, 474 to 492, and 496 to 516; these read FQIC…PNIV, SMVQ…YGHL, LCFL…LVYC, FLAG…EWTL, IMVL…LAFA, ILQL…WKMV, VFGL…LILN, LFQI…LLTL, ISQI…TFLP, VVLA…ASVH, VSGR…LMAY, and LPWI…LLLP.

It belongs to the major facilitator (TC 2.A.1) superfamily. Organic cation transporter (TC 2.A.1.19) family. Localized to the kidney. Highly specific expression pattern in the nephron, localized to segment 3 of the proximal tubule.

Its subcellular location is the cell membrane. It catalyses the reaction estrone 3-sulfate(out) + glutarate(in) = estrone 3-sulfate(in) + glutarate(out). It carries out the reaction 17beta-estradiol 17-O-(beta-D-glucuronate)(out) + glutarate(in) = 17beta-estradiol 17-O-(beta-D-glucuronate)(in) + glutarate(out). The enzyme catalyses taurocholate(out) + glutarate(in) = taurocholate(in) + glutarate(out). The catalysed reaction is 5alpha-androstane-3alpha,17beta-diol 3-O-(beta-D-glucuronate)(out) + glutarate(in) = 5alpha-androstane-3alpha,17beta-diol 3-O-(beta-D-glucuronate)(in) + glutarate(out). It catalyses the reaction glycocholate(out) + glutarate(in) = glycocholate(in) + glutarate(out). It carries out the reaction dehydroepiandrosterone 3-sulfate(out) + glutarate(in) = dehydroepiandrosterone 3-sulfate(in) + glutarate(out). The enzyme catalyses glutarate(in) + succinate(out) = glutarate(out) + succinate(in). With respect to regulation, transport is chloride sensitive and transtimulated by glutaric acid. Transport is inhibited by anionic compounds from different chemical classes. Its function is as follows. Renal transmembrane organic anion/dicarboxylate exchanger that participates in the reabsorption of conjugated steroids including estradiol-17beta-D-glucuronide (or 17beta-estradiol 17-O-(beta-D-glucuronate)), androstanediol glucuronide (or 5alpha-androstane-3alpha,17beta-diol 3-O-(beta-D-glucuronate)), and estrone 3-sulfate, as well as bile acids taurocholate and glycocholate, driven by an outward gradient of dicarboxylates such as glutarate or succinate. Functionally, similar uptake function as Isoform 1. Lack of transporter activity. This chain is Steroid transmembrane transporter SLC22A24, found in Homo sapiens (Human).